Consider the following 646-residue polypeptide: Vitamin K-dependent protein S (646 aa).

Positions 1 to 12 (GHASQVLVRKRR) are excised as a propeptide. Residues 13–58 (ANSMLEETKKGNLERECIEELCNKEEAREVFENDPETDYFYPKYLG) form the Gla domain. A 4-carboxyglutamate mark is found at Glu18, Glu19, Glu26, Glu28, Glu31, Glu32, Glu37, Glu38, Glu41, Glu44, and Glu48. Cys29 and Cys34 are joined by a disulfide. Residues 59–87 (CLGSFRAKLFTATRRSANGYPDLRSCVNA) form a thrombin-sensitive region. The EGF-like 1 domain occupies 88 to 126 (IPDQCNPLPCSEEGYLNCKDGQATFTCICKPGWQGEKCE). Intrachain disulfides connect Cys92-Cys105, Cys97-Cys114, Cys116-Cys125, Cys132-Cys146, Cys142-Cys155, Cys157-Cys170, Cys176-Cys188, Cys183-Cys197, Cys199-Cys212, Cys218-Cys227, Cys223-Cys236, Cys238-Cys253, and Cys420-Cys446. The residue at position 107 (Asp107) is a (3R)-3-hydroxyaspartate. An EGF-like 2; calcium-binding domain is found at 128-171 (DINECKDPTNINGGCSQICDNTAGSYHCSCKSGFVMLANEKDCK). The EGF-like 3; calcium-binding domain occupies 172–213 (DMDECSVKPSVCGTAVCKNTPGDFECECSEGYRYNPTAKSCE). Positions 214 to 254 (DIDECSENMCAQLCVNYPGGYSCYCDGKKGFKLAQDKKSCE) constitute an EGF-like 4; calcium-binding domain. Laminin G-like domains are found at residues 270-446 (LLYL…KKHC) and 455-636 (YYPG…AHSC). Asn470 and Asn480 each carry an N-linked (GlcNAc...) asparagine glycan. Cys609 and Cys636 form a disulfide bridge.

Interacts with C4b-binding protein, a regulator of the complex system. In rabbit plasma however, protein S appears to be present only in free form. Post-translationally, the iron and 2-oxoglutarate dependent 3-hydroxylation of aspartate and asparagine is (R) stereospecific within EGF domains. As to expression, plasma.

The protein localises to the secreted. In terms of biological role, anticoagulant plasma protein; it is a cofactor to activated protein C in the degradation of coagulation factors Va and VIIIa. It helps to prevent coagulation and stimulating fibrinolysis. This chain is Vitamin K-dependent protein S (PROS1), found in Oryctolagus cuniculus (Rabbit).